The primary structure comprises 320 residues: Methionyl-tRNA formyltransferase (320 aa).

112 to 115 (SILP) provides a ligand contact to (6S)-5,6,7,8-tetrahydrofolate.

It belongs to the Fmt family.

It catalyses the reaction L-methionyl-tRNA(fMet) + (6R)-10-formyltetrahydrofolate = N-formyl-L-methionyl-tRNA(fMet) + (6S)-5,6,7,8-tetrahydrofolate + H(+). Attaches a formyl group to the free amino group of methionyl-tRNA(fMet). The formyl group appears to play a dual role in the initiator identity of N-formylmethionyl-tRNA by promoting its recognition by IF2 and preventing the misappropriation of this tRNA by the elongation apparatus. The protein is Methionyl-tRNA formyltransferase of Shewanella woodyi (strain ATCC 51908 / MS32).